A 202-amino-acid polypeptide reads, in one-letter code: IMP cyclohydrolase (202 aa).

Positions 29–52 (VQRDGTVTVEPTPDAPETDNPYIS) are disordered.

Belongs to the archaeal IMP cyclohydrolase family.

It catalyses the reaction IMP + H2O = 5-formamido-1-(5-phospho-D-ribosyl)imidazole-4-carboxamide. It functions in the pathway purine metabolism; IMP biosynthesis via de novo pathway; IMP from 5-formamido-1-(5-phospho-D-ribosyl)imidazole-4-carboxamide: step 1/1. Its function is as follows. Catalyzes the cyclization of 5-formylamidoimidazole-4-carboxamide ribonucleotide to IMP. The sequence is that of IMP cyclohydrolase from Haloarcula marismortui (strain ATCC 43049 / DSM 3752 / JCM 8966 / VKM B-1809) (Halobacterium marismortui).